A 219-amino-acid chain; its full sequence is Deoxyribose-phosphate aldolase (219 aa).

Asp89 functions as the Proton donor/acceptor in the catalytic mechanism. Lys151 acts as the Schiff-base intermediate with acetaldehyde in catalysis. Residue Lys180 is the Proton donor/acceptor of the active site.

Belongs to the DeoC/FbaB aldolase family. DeoC type 1 subfamily.

The protein localises to the cytoplasm. The catalysed reaction is 2-deoxy-D-ribose 5-phosphate = D-glyceraldehyde 3-phosphate + acetaldehyde. It participates in carbohydrate degradation; 2-deoxy-D-ribose 1-phosphate degradation; D-glyceraldehyde 3-phosphate and acetaldehyde from 2-deoxy-alpha-D-ribose 1-phosphate: step 2/2. Functionally, catalyzes a reversible aldol reaction between acetaldehyde and D-glyceraldehyde 3-phosphate to generate 2-deoxy-D-ribose 5-phosphate. The sequence is that of Deoxyribose-phosphate aldolase from Coprothermobacter proteolyticus (strain ATCC 35245 / DSM 5265 / OCM 4 / BT).